Consider the following 328-residue polypeptide: Ketol-acid reductoisomerase (NADP(+)) (328 aa).

Residues 2-182 form the KARI N-terminal Rossmann domain; it reads AKIYTDREAS…GATRAGVIET (181 aa). NADP(+)-binding positions include 25–28, R48, S53, and 83–86; these read YGIQ and DMEQ. H108 is an active-site residue. NADP(+) is bound at residue G134. The KARI C-terminal knotted domain maps to 183–328; sequence TFAEETETDL…EEMRKLLFGP (146 aa). D191, E195, E227, and E231 together coordinate Mg(2+). Residue S252 coordinates substrate.

The protein belongs to the ketol-acid reductoisomerase family. It depends on Mg(2+) as a cofactor.

It catalyses the reaction (2R)-2,3-dihydroxy-3-methylbutanoate + NADP(+) = (2S)-2-acetolactate + NADPH + H(+). The catalysed reaction is (2R,3R)-2,3-dihydroxy-3-methylpentanoate + NADP(+) = (S)-2-ethyl-2-hydroxy-3-oxobutanoate + NADPH + H(+). It participates in amino-acid biosynthesis; L-isoleucine biosynthesis; L-isoleucine from 2-oxobutanoate: step 2/4. Its pathway is amino-acid biosynthesis; L-valine biosynthesis; L-valine from pyruvate: step 2/4. In terms of biological role, involved in the biosynthesis of branched-chain amino acids (BCAA). Catalyzes an alkyl-migration followed by a ketol-acid reduction of (S)-2-acetolactate (S2AL) to yield (R)-2,3-dihydroxy-isovalerate. In the isomerase reaction, S2AL is rearranged via a Mg-dependent methyl migration to produce 3-hydroxy-3-methyl-2-ketobutyrate (HMKB). In the reductase reaction, this 2-ketoacid undergoes a metal-dependent reduction by NADPH to yield (R)-2,3-dihydroxy-isovalerate. The polypeptide is Ketol-acid reductoisomerase (NADP(+)) (Pyrobaculum aerophilum (strain ATCC 51768 / DSM 7523 / JCM 9630 / CIP 104966 / NBRC 100827 / IM2)).